The following is a 197-amino-acid chain: TATA-box-binding protein (197 aa).

Repeat copies occupy residues 10-86 and 101-177.

This sequence belongs to the TBP family.

General factor that plays a role in the activation of archaeal genes transcribed by RNA polymerase. Binds specifically to the TATA box promoter element which lies close to the position of transcription initiation. The sequence is that of TATA-box-binding protein from Pyrobaculum neutrophilum (strain DSM 2338 / JCM 9278 / NBRC 100436 / V24Sta) (Thermoproteus neutrophilus).